The primary structure comprises 149 residues: 3-dehydroquinate dehydratase (149 aa).

Y24 functions as the Proton acceptor in the catalytic mechanism. The substrate site is built by N75, H81, and D88. The active-site Proton donor is H101. Substrate contacts are provided by residues 102–103 (IS) and R112.

Belongs to the type-II 3-dehydroquinase family. In terms of assembly, homododecamer.

It carries out the reaction 3-dehydroquinate = 3-dehydroshikimate + H2O. Its pathway is metabolic intermediate biosynthesis; chorismate biosynthesis; chorismate from D-erythrose 4-phosphate and phosphoenolpyruvate: step 3/7. In terms of biological role, catalyzes a trans-dehydration via an enolate intermediate. The polypeptide is 3-dehydroquinate dehydratase (Methylobacterium radiotolerans (strain ATCC 27329 / DSM 1819 / JCM 2831 / NBRC 15690 / NCIMB 10815 / 0-1)).